Reading from the N-terminus, the 1649-residue chain is PHD and RING finger domain-containing protein 1 (1649 aa).

The interval 1 to 79 (MDDDSLDELV…RSGSEDSEDD (79 aa)) is disordered. S5 bears the Phosphoserine mark. Over residues 54–79 (TDGEDEGASEEEDLEDRSGSEDSEDD) the composition is skewed to acidic residues. An RING-type; degenerate zinc finger spans residues 108–149 (CPICLNAFRDQAVGTPENCAHYFCLDCIVEWSKNANSCPVDR). The PHD-type zinc finger occupies 183-233 (PTFCEVCGRSDREDRLLLCDGCDAGYHMECLDPPLQEVPVDEWFCPECAAP). Residues 324–398 (VYQRPLTPRT…TRSRIARTLG (75 aa)) are disordered. Residue T330 is modified to Phosphothreonine. Basic residues predominate over residues 334 to 353 (PARRKRKTRRRKKVPGRKKT). Over residues 354–366 (PSGPSAKSKSSAT) the composition is skewed to low complexity. The segment covering 367–382 (RSKKRQHRVKKRRGKK) has biased composition (basic residues). S445 and S455 each carry phosphoserine. Disordered regions lie at residues 534–600 (KRAA…GAPV), 644–871 (SAAS…PKAQ), 888–1240 (FGTE…KAPL), and 1281–1395 (IQLD…PLLR). Residues 568–589 (SPAQGPSGNRPQSTGLSCQGRS) show a composition bias toward polar residues. Basic and acidic residues-rich tracts occupy residues 685–697 (IRRD…RDAA) and 727–742 (TRAE…REPG). A compositionally biased stretch (polar residues) spans 786 to 796 (AHSSQLSSPGF). A compositionally biased stretch (basic and acidic residues) spans 802–812 (PVDDKEQRKEN). Residues S814, S845, S846, S864, S867, and S915 each carry the phosphoserine modification. Composition is skewed to polar residues over residues 835–848 (PTGS…SSPE) and 859–871 (ITRT…PKAQ). T917 is modified (phosphothreonine). Phosphoserine occurs at positions 936, 973, and 991. A compositionally biased stretch (low complexity) spans 988–999 (RPPSRSRSTSSS). The segment covering 1000 to 1011 (RSRKKAKRKRVS) has biased composition (basic residues). Basic and acidic residues predominate over residues 1012 to 1030 (REHGRTRSGTRSESRDRSS). Residues 1043-1053 (RRQRSKAKSRR) are compositionally biased toward basic residues. Residues 1054-1063 (SSSDRSSSRE) show a composition bias toward basic and acidic residues. Over residues 1064 to 1090 (RAKRKKAKDKSREHRRGPWGHSRRTSR) the composition is skewed to basic residues. The span at 1091 to 1101 (SRSGSPGSSSY) shows a compositional bias: low complexity. The span at 1106–1118 (SRKKKKRRSASRP) shows a compositional bias: basic residues. Residues S1124 and S1128 each carry the phosphoserine modification. Composition is skewed to basic and acidic residues over residues 1141–1151 (RSHERPDRKES) and 1181–1198 (REKW…KGAV). Residues S1202 and S1229 each carry the phosphoserine modification. A compositionally biased stretch (low complexity) spans 1284–1297 (DDMSSPPSPESTDS). The span at 1345–1356 (HLLRPDAAEKAE) shows a compositional bias: basic and acidic residues. Phosphoserine occurs at positions 1359, 1360, and 1371. T1404 carries the phosphothreonine modification. Disordered stretches follow at residues 1407–1439 (LQES…WDME), 1455–1486 (FPSH…AQPS), 1526–1556 (TPAS…EKTK), and 1630–1649 (MRRH…GAEG). A compositionally biased stretch (polar residues) spans 1531–1540 (PASQATAASN). Basic and acidic residues predominate over residues 1541–1556 (SEEKTPAPRLAAEKTK). The stretch at 1549-1579 (RLAAEKTKKEEYMKKLHMQERAVEEVKLAIK) forms a coiled coil.

In terms of assembly, interacts with POLR2A (via the C-terminal domain).

The protein is PHD and RING finger domain-containing protein 1 (PHRF1) of Homo sapiens (Human).